A 370-amino-acid polypeptide reads, in one-letter code: Cytochrome b (370 aa).

Transmembrane regions (helical) follow at residues 25 to 45 (FGSMLLTCMALQTSTGFFLAI), 69 to 90 (WIMQNLHAIGASLFFICIYTHI), 105 to 125 (WLSGTILLIILMATAFFGYVL), and 170 to 190 (FFALHFILPFLIISLSSIHIV). Heme b contacts are provided by histidine 75 and histidine 89. 2 residues coordinate heme b: histidine 174 and histidine 188. Histidine 193 provides a ligand contact to a ubiquinone. Transmembrane regions (helical) follow at residues 218 to 238 (YKDMLMATTMITMLFITMSFM), 280 to 300 (LGGTLALLMSVIILTAPPFTH), 312 to 332 (LTQILFWMLIATFITITWTAT), and 339 to 358 (FITISQMASTXYFLFFIINP).

The protein belongs to the cytochrome b family. As to quaternary structure, the cytochrome bc1 complex contains 3 respiratory subunits (MT-CYB, CYC1 and UQCRFS1), 2 core proteins (UQCRC1 and UQCRC2) and probably 6 low-molecular weight proteins. Heme b serves as cofactor.

Its subcellular location is the mitochondrion inner membrane. In terms of biological role, component of the ubiquinol-cytochrome c reductase complex (complex III or cytochrome b-c1 complex) that is part of the mitochondrial respiratory chain. The b-c1 complex mediates electron transfer from ubiquinol to cytochrome c. Contributes to the generation of a proton gradient across the mitochondrial membrane that is then used for ATP synthesis. In Micropechis ikaheca (New Guinean small-eyed snake), this protein is Cytochrome b (MT-CYB).